Consider the following 295-residue polypeptide: Nucleotide-binding protein PEPE_0450 (295 aa).

12 to 19 serves as a coordination point for ATP; that stretch reads GMSGAGKT. 62-65 is a GTP binding site; sequence DLRS.

This sequence belongs to the RapZ-like family.

In terms of biological role, displays ATPase and GTPase activities. The polypeptide is Nucleotide-binding protein PEPE_0450 (Pediococcus pentosaceus (strain ATCC 25745 / CCUG 21536 / LMG 10740 / 183-1w)).